The primary structure comprises 316 residues: UDP-N-acetylenolpyruvoylglucosamine reductase (316 aa).

An FAD-binding PCMH-type domain is found at 30–194 (VGGEADYLVF…LSVKFALAPG (165 aa)). The active site involves Arg-173. Ser-223 functions as the Proton donor in the catalytic mechanism. Glu-293 is an active-site residue.

The protein belongs to the MurB family. It depends on FAD as a cofactor.

Its subcellular location is the cytoplasm. The enzyme catalyses UDP-N-acetyl-alpha-D-muramate + NADP(+) = UDP-N-acetyl-3-O-(1-carboxyvinyl)-alpha-D-glucosamine + NADPH + H(+). The protein operates within cell wall biogenesis; peptidoglycan biosynthesis. Its function is as follows. Cell wall formation. This is UDP-N-acetylenolpyruvoylglucosamine reductase from Streptococcus pneumoniae serotype 19F (strain G54).